A 96-amino-acid polypeptide reads, in one-letter code: Small ribosomal subunit protein bS18 (96 aa).

Basic and acidic residues predominate over residues 1–22; it reads MYKDIDSHQRDSRTDGHQDGFK. Residues 1 to 25 form a disordered region; sequence MYKDIDSHQRDSRTDGHQDGFKKNP.

Belongs to the bacterial ribosomal protein bS18 family. In terms of assembly, part of the 30S ribosomal subunit. Forms a tight heterodimer with protein bS6.

In terms of biological role, binds as a heterodimer with protein bS6 to the central domain of the 16S rRNA, where it helps stabilize the platform of the 30S subunit. This Borrelia duttonii (strain Ly) protein is Small ribosomal subunit protein bS18.